Reading from the N-terminus, the 89-residue chain is uncharacterized protein (89 aa).

A disordered region spans residues 66–89 (RIKEQSSSSSATRTTQEPSLHLPD).

This is an uncharacterized protein from Cestrum parqui (CmYLCV).